A 425-amino-acid polypeptide reads, in one-letter code: Probable proline--tRNA ligase, mitochondrial (425 aa).

The protein belongs to the class-II aminoacyl-tRNA synthetase family.

It localises to the mitochondrion. It catalyses the reaction tRNA(Pro) + L-proline + ATP = L-prolyl-tRNA(Pro) + AMP + diphosphate. The polypeptide is Probable proline--tRNA ligase, mitochondrial (Schizosaccharomyces pombe (strain 972 / ATCC 24843) (Fission yeast)).